We begin with the raw amino-acid sequence, 465 residues long: Gamma-aminobutyric acid receptor subunit rho-2 (465 aa).

The signal sequence occupies residues Met1 to Ser20. The Extracellular segment spans residues Arg21–His260. Residue Arg105 coordinates 4-aminobutanoate. Residue Asn120 is glycosylated (N-linked (GlcNAc...) asparagine). Ser169 provides a ligand contact to 4-aminobutanoate. An intrachain disulfide couples Cys178 to Cys192. Glu197 contacts 4-aminobutanoate. N-linked (GlcNAc...) asparagine glycosylation occurs at Asn254. The helical transmembrane segment at Ile261–Val281 threads the bilayer. At Ser282–Arg293 the chain is on the cytoplasmic side. A helical membrane pass occupies residues Val294–Ser314. Residues Met315–Asp325 lie on the Extracellular side of the membrane. A helical membrane pass occupies residues Ile326–Asn346. Residues Tyr347–Lys443 lie on the Cytoplasmic side of the membrane. A helical membrane pass occupies residues Tyr444–Phe464. Residue Ser465 is a topological domain, extracellular.

The protein belongs to the ligand-gated ion channel (TC 1.A.9) family. Gamma-aminobutyric acid receptor (TC 1.A.9.5) subfamily. GABRR2 sub-subfamily. As to quaternary structure, three rho subunits (rho-1/GBRR1, rho-2/GBRR2 and rho-3/GBRR3) coassemble either to form functional homopentamers or heteropentamers. Rho-2 is unable to form a functional homopentamer. Interacts with SQSTM1.

The protein localises to the postsynaptic cell membrane. It is found in the cell membrane. It carries out the reaction chloride(in) = chloride(out). Functionally, rho subunit of the pentameric ligand-gated chloride channels responsible for mediating the effects of gamma-aminobutyric acid (GABA), the major inhibitory neurotransmitter in the brain. Rho-containing GABA-gated chloride channels are a subclass of GABA(A) receptors (GABAARs) entirely composed of rho subunits, where GABA molecules bind at the rho intersubunit interfaces. When activated by GABA, rho-GABAARs selectively allow the flow of chloride anions across the cell membrane down their electrochemical gradient. Rho-2 GABAARs may contribute to the regulation of glial development in the cerebellum by controlling extrasynaptic transmission. Rho-2 GABAARs are also involved in neuronal tonic (extrasynaptic) and phasic (synaptic) transmission in the Purkinje neurons of the cerebellum. Rho-2 GABAARs expressed in retina may play a role in retinal neurotransmission. This is Gamma-aminobutyric acid receptor subunit rho-2 from Homo sapiens (Human).